A 624-amino-acid chain; its full sequence is Chaperone protein HtpG (624 aa).

The a; substrate-binding stretch occupies residues 1–336 (MKGQETRGFQ…SNDLPLNVSR (336 aa)). The tract at residues 337–552 (EILQDSTVTR…ADEMGTQMAK (216 aa)) is b. Positions 553-624 (LFAAAGQAMP…IKRVNALLLG (72 aa)) are c.

Belongs to the heat shock protein 90 family. As to quaternary structure, homodimer.

It is found in the cytoplasm. Its function is as follows. Molecular chaperone. Has ATPase activity. The sequence is that of Chaperone protein HtpG from Enterobacter sp. (strain 638).